A 218-amino-acid polypeptide reads, in one-letter code: Flagellin B1 (218 aa).

A propeptide spanning residues M1–G12 is cleaved from the precursor. N38, N71, N77, N115, and N136 each carry an N-linked (GlcNAc...) asparagine glycan.

This sequence belongs to the archaeal flagellin family. N-linked glycans consist of the 779 Da trisaccharide beta-ManNAc(Thr)-(1-4)-beta-GlcNAc3NAcA-(1-3)-beta-GlcNAc.

Its subcellular location is the archaeal flagellum. Its function is as follows. Flagellin is the subunit protein which polymerizes to form the filaments of archaeal flagella. This Methanococcus voltae protein is Flagellin B1 (flaB1).